Consider the following 800-residue polypeptide: Ent-copalyl diphosphate synthase 2, chloroplastic (800 aa).

A chloroplast-targeting transit peptide spans 1–47; it reads MQMQVLTAASSLPRATLLRPAAAEPWRQSFLQLQARPIQRPGIMLHC. Residues 52 to 80 form a disordered region; it reads QGQETRERRQLDDDEHARPPQGGDDDVAA. The span at 55 to 69 shows a compositional bias: basic and acidic residues; it reads ETRERRQLDDDEHAR. Residue K242 coordinates substrate. Residues D374 and D376 each contribute to the Mg(2+) site. Residues 374-377 carry the DXDD motif motif; that stretch reads DIDD. Position 461 (K461) interacts with substrate.

The protein belongs to the terpene synthase family. The cofactor is Mg(2+).

The protein localises to the plastid. It is found in the chloroplast. The enzyme catalyses (2E,6E,10E)-geranylgeranyl diphosphate = ent-copalyl diphosphate. It participates in secondary metabolite biosynthesis; terpenoid biosynthesis. Functionally, catalyzes the conversion of geranylgeranyl diphosphate to the phytoalexin precursor ent-copalyl diphosphate. This Oryza sativa subsp. japonica (Rice) protein is Ent-copalyl diphosphate synthase 2, chloroplastic.